A 258-amino-acid chain; its full sequence is PF03932 family protein CutC (258 aa).

The protein belongs to the CutC family.

It is found in the cytoplasm. This is PF03932 family protein CutC from Mesorhizobium japonicum (strain LMG 29417 / CECT 9101 / MAFF 303099) (Mesorhizobium loti (strain MAFF 303099)).